The primary structure comprises 391 residues: Cathepsin E (391 aa).

Residues 1-19 (MKTFLLLLLVLLELGQAPG) form the signal peptide. Residues 20–53 (ALHRVPLSRRESLRKKLRAQGQLTELWKSQNLNM) constitute a propeptide, activation peptide. Residues 74-387 (YFGTISIGSP…DRGNNRVGLA (314 aa)) form the Peptidase A1 domain. Residue Asn-86 is glycosylated (N-linked (GlcNAc...) asparagine). The active site involves Asp-92. Disulfide bonds link Cys-105–Cys-110 and Cys-267–Cys-271. Residue Asp-276 is part of the active site. A disulfide bridge links Cys-309 with Cys-346.

This sequence belongs to the peptidase A1 family. In terms of assembly, homodimer; disulfide-linked. Post-translationally, glycosylated. The nature of the carbohydrate chain varies between cell types. In terms of tissue distribution, expressed abundantly in the surface and foveolar epithelial cells of the fundic and pyloric stomach mucosa, and at very low levels in the spleen.

The protein localises to the endosome. The catalysed reaction is Similar to cathepsin D, but slightly broader specificity.. Its function is as follows. May have a role in immune function. Probably involved in the processing of antigenic peptides during MHC class II-mediated antigen presentation. May play a role in activation-induced lymphocyte depletion in the thymus, and in neuronal degeneration and glial cell activation in the brain. This is Cathepsin E (CTSE) from Cavia porcellus (Guinea pig).